The primary structure comprises 1557 residues: Ras guanine nucleotide exchange factor K (1557 aa).

Over residues 1–16 (MEPTINPPVNLPPPVP) the composition is skewed to pro residues. 6 disordered regions span residues 1 to 121 (MEPT…SYTV), 146 to 181 (VETL…KLSV), 195 to 238 (LYQQ…SPQL), 283 to 347 (SPLP…GLTP), 558 to 619 (NNNN…DELS), and 881 to 937 (TNNN…QVNH). Composition is skewed to low complexity over residues 17-40 (SRSN…NNTN), 52-63 (SSPSSPSSPSPS), 73-90 (NNNN…NGNV), 102-114 (ISSP…HTSS), 148-161 (TLSS…KTTT), 195-207 (LYQQ…NPNS), and 222-236 (PPSS…STSP). Over residues 283–310 (SPLPPPPLTIPNKVPPLPMRLPPPPPPQ) the composition is skewed to pro residues. 2 coiled-coil regions span residues 310 to 338 (QQLD…SNST) and 591 to 629 (NNNN…EEEL). The segment covering 311-333 (QLDQMYSNNNQQQQQQQQQQQNN) has biased composition (low complexity). A compositionally biased stretch (polar residues) spans 334 to 343 (ESNSTTTSEG). Composition is skewed to low complexity over residues 558-610 (NNNN…NNNN) and 881-928 (TNNN…TPTT). The N-terminal Ras-GEF domain maps to 1058 to 1177 (LNAEIDAATL…QIRNCILKRT (120 aa)). Residues 1254–1303 (PSISQNTPSSPSLIPSSPRPITSSSSVSSSTLLKSPLSQQAKSRIPETKT) form a disordered region. Residues 1261–1291 (PSSPSLIPSSPRPITSSSSVSSSTLLKSPLS) are compositionally biased toward low complexity. In terms of domain architecture, Ras-GEF spans 1316–1549 (DDEEIARQLT…YHLSLLKEPR (234 aa)).

In terms of biological role, promotes the exchange of Ras-bound GDP by GTP. This chain is Ras guanine nucleotide exchange factor K (gefK), found in Dictyostelium discoideum (Social amoeba).